A 400-amino-acid chain; its full sequence is PHD finger protein 24 (400 aa).

Residue G2 is the site of N-myristoyl glycine attachment. The segment at 30 to 108 is disordered; the sequence is DRPSIRRTGE…FTPPAFIRPT (79 aa). Position 36 is an omega-N-methylarginine (R36). The residue at position 43 (S43) is a Phosphoserine. T47 is subject to Phosphothreonine. S51 carries the phosphoserine modification. Residues 78-97 are compositionally biased toward basic and acidic residues; it reads AWERLRDGRGVEPEEFDRTG. A PHD-type zinc finger spans residues 129–190; the sequence is NDEMCDVCEV…TGWSCHYCDN (62 aa).

This Pongo abelii (Sumatran orangutan) protein is PHD finger protein 24.